The following is a 411-amino-acid chain: 4-coumarate--CoA ligase (411 aa).

It belongs to the ATP-dependent AMP-binding enzyme family.

The enzyme catalyses (E)-4-coumarate + ATP + CoA = (E)-4-coumaroyl-CoA + AMP + diphosphate. Functionally, converts p-coumaric acid into p-coumaryl CoA. This is necessary for the activation of the photoactive yellow protein (PYP) chromophore. This Cereibacter sphaeroides (strain ATCC 17023 / DSM 158 / JCM 6121 / CCUG 31486 / LMG 2827 / NBRC 12203 / NCIMB 8253 / ATH 2.4.1.) (Rhodobacter sphaeroides) protein is 4-coumarate--CoA ligase (pcl).